Here is a 167-residue protein sequence, read N- to C-terminus: CASP-like protein UU1 (167 aa).

Residues 1-17 lie on the Cytoplasmic side of the membrane; it reads MVELESQEAVTVASTAD. The chain crosses the membrane as a helical span at residues 18–38; sequence IAVDVSLRLLAAATSLASAVV. The Extracellular segment spans residues 39-54; sequence VAANHQQRWGVRVDFT. A helical transmembrane segment spans residues 55 to 75; sequence LFQVWIGFVAVNLVCTVYAAA. Residues 76 to 94 are Cytoplasmic-facing; it reads TAAAARKAMGRWWLHHADA. Residues 95–115 traverse the membrane as a helical segment; sequence VVVNLEAAATAGAGAIGSIAM. The Extracellular portion of the chain corresponds to 116-135; the sequence is WGNEASGWYAVCRLYRRYCN. A helical membrane pass occupies residues 136 to 156; that stretch reads AGAAALALSLAAVLLLGVACA. The Cytoplasmic segment spans residues 157 to 167; it reads RSRYPKMPPTT.

It belongs to the Casparian strip membrane proteins (CASP) family. Homodimer and heterodimers.

Its subcellular location is the cell membrane. This Oryza sativa subsp. indica (Rice) protein is CASP-like protein UU1.